The following is a 480-amino-acid chain: UDP-glucose 6-dehydrogenase 4 (480 aa).

NAD(+)-binding positions include 3 to 20, D33, R38, T90, T128, and E161; that span reads KICC…MAVI. Substrate-binding positions include 157–161, K216, 216–223, 256–269, and G269; these read EFLAE, KLAANAFL, and RIGS…VGFG. The active-site Nucleophile is C272. Position 275 (K275) interacts with NAD(+). Residues F334 and K335 each contribute to the substrate site. An NAD(+)-binding site is contributed by R342. R447 is a binding site for substrate.

This sequence belongs to the UDP-glucose/GDP-mannose dehydrogenase family.

The catalysed reaction is UDP-alpha-D-glucose + 2 NAD(+) + H2O = UDP-alpha-D-glucuronate + 2 NADH + 3 H(+). It functions in the pathway nucleotide-sugar biosynthesis; UDP-alpha-D-glucuronate biosynthesis; UDP-alpha-D-glucuronate from UDP-alpha-D-glucose: step 1/1. Its activity is regulated as follows. Inhibited by UDP-xylose. Functionally, involved in the biosynthesis of UDP-glucuronic acid (UDP-GlcA), providing nucleotide sugars for cell-wall polymers. The protein is UDP-glucose 6-dehydrogenase 4 of Arabidopsis thaliana (Mouse-ear cress).